Consider the following 334-residue polypeptide: DnaJ protein homolog 1 (334 aa).

In terms of domain architecture, J spans 4-68; sequence DFYKILGLER…KKRDIFDNYG (65 aa). A Phosphoserine modification is found at S187.

It localises to the cytoplasm. This is DnaJ protein homolog 1 (DnaJ-1) from Drosophila melanogaster (Fruit fly).